A 520-amino-acid chain; its full sequence is Cytochrome P450 6d3 (520 aa).

Cys461 serves as a coordination point for heme.

This sequence belongs to the cytochrome P450 family. Heme serves as cofactor.

The protein resides in the endoplasmic reticulum membrane. It localises to the microsome membrane. Functionally, metabolizes pyrethroid insecticides and other xenobiotics. The chain is Cytochrome P450 6d3 (CYP6D3) from Musca domestica (House fly).